We begin with the raw amino-acid sequence, 272 residues long: EID1-like F-box protein 3 (272 aa).

The F-box domain maps to 29–81 (SGKSGIENERVLVLVFESISWDIHTLCTIASLSRRFCAIARRILWRRLCVNRA).

This Arabidopsis thaliana (Mouse-ear cress) protein is EID1-like F-box protein 3 (EDL3).